The chain runs to 217 residues: Orotidine 5'-phosphate decarboxylase (217 aa).

Residues D14, K36, 64 to 73 (DFKVADIPST), S120, 172 to 182 (PGVGAQGGNLS), G197, and R198 contribute to the substrate site. K66 acts as the Proton donor in catalysis.

This sequence belongs to the OMP decarboxylase family. Type 1 subfamily. Homodimer.

It catalyses the reaction orotidine 5'-phosphate + H(+) = UMP + CO2. It functions in the pathway pyrimidine metabolism; UMP biosynthesis via de novo pathway; UMP from orotate: step 2/2. In terms of biological role, catalyzes the decarboxylation of orotidine 5'-monophosphate (OMP) to uridine 5'-monophosphate (UMP). This is Orotidine 5'-phosphate decarboxylase from Methanococcus maripaludis (strain C6 / ATCC BAA-1332).